The sequence spans 189 residues: Dihydrofolate reductase (189 aa).

One can recognise a DHFR domain in the interval 3-184 (SLNSIVAVCQ…IQYKFEVYQK (182 aa)). Residues Ala-9 and 15 to 21 (GIGKDGN) contribute to the NADP(+) site. A substrate-binding site is contributed by 30 to 35 (EYKYFQ). 54 to 56 (KKT) is a binding site for NADP(+). Substrate-binding residues include Asn-64 and Arg-70. Residues 76 to 78 (SRE) and 116 to 123 (GGTAVYKA) each bind NADP(+).

It belongs to the dihydrofolate reductase family.

It carries out the reaction (6S)-5,6,7,8-tetrahydrofolate + NADP(+) = 7,8-dihydrofolate + NADPH + H(+). Its pathway is cofactor biosynthesis; tetrahydrofolate biosynthesis; 5,6,7,8-tetrahydrofolate from 7,8-dihydrofolate: step 1/1. Key enzyme in folate metabolism. Contributes to the de novo mitochondrial thymidylate biosynthesis pathway. Catalyzes an essential reaction for de novo glycine and purine synthesis, and for DNA precursor synthesis. May bind to mRNA. In Gallus gallus (Chicken), this protein is Dihydrofolate reductase (DHFR).